A 339-amino-acid polypeptide reads, in one-letter code: Serine racemase (339 aa).

Residue E13 coordinates Mg(2+). S31, S32, I33, K51, and T52 together coordinate ATP. The active-site Proton acceptor is the K56. K56 is modified (N6-(pyridoxal phosphate)lysine). P69 lines the Ca(2+) pocket. T71 carries the phosphothreonine modification. T81 lines the Ca(2+) pocket. S84 functions as the Proton acceptor in the catalytic mechanism. N86 contacts pyridoxal 5'-phosphate. Q89 contributes to the ATP binding site. S-nitrosocysteine is present on C113. Y121 is an ATP binding site. Residue N154 participates in pyridoxal 5'-phosphate binding. D178 is a binding site for Mg(2+). Pyridoxal 5'-phosphate contacts are provided by G185, G186, G187, G188, and M189. Mg(2+) is bound by residues E210, A214, D216, and N247. 4 residues coordinate Ca(2+): E210, A214, D216, and N247. Mn(2+) is bound by residues E210, A214, and D216. K279 contributes to the ATP binding site. Pyridoxal 5'-phosphate is bound at residue S313. N316 lines the ATP pocket.

This sequence belongs to the serine/threonine dehydratase family. As to quaternary structure, homodimer. The cofactor is Mg(2+). Mn(2+) is required as a cofactor. It depends on Ca(2+) as a cofactor. Requires pyridoxal 5'-phosphate as cofactor. Post-translationally, S-nitrosylated, leading to decrease the enzyme activity. Expressed in the hippocampus (at protein level). Expressed in the small intestine.

It catalyses the reaction L-serine = D-serine. The enzyme catalyses D-serine = pyruvate + NH4(+). The catalysed reaction is L-serine = pyruvate + NH4(+). Its activity is regulated as follows. Allosterically activated by magnesium, and possibly also other divalent metal cations. Allosterically activated by ATP, ADP or GTP. Functionally, catalyzes the synthesis of D-serine from L-serine. D-serine is a key coagonist with glutamate at NMDA receptors. Has dehydratase activity towards both L-serine and D-serine. The chain is Serine racemase (Srr) from Mus musculus (Mouse).